Reading from the N-terminus, the 223-residue chain is Putative N-acetylmannosamine-6-phosphate 2-epimerase (223 aa).

Belongs to the NanE family.

It catalyses the reaction an N-acyl-D-glucosamine 6-phosphate = an N-acyl-D-mannosamine 6-phosphate. It functions in the pathway amino-sugar metabolism; N-acetylneuraminate degradation; D-fructose 6-phosphate from N-acetylneuraminate: step 3/5. Converts N-acetylmannosamine-6-phosphate (ManNAc-6-P) to N-acetylglucosamine-6-phosphate (GlcNAc-6-P). This Staphylococcus haemolyticus (strain JCSC1435) protein is Putative N-acetylmannosamine-6-phosphate 2-epimerase.